Consider the following 563-residue polypeptide: Putative inactive polypeptide N-acetylgalactosaminyltransferase 12 (563 aa).

The Cytoplasmic portion of the chain corresponds to 1–6 (MEVFAS). The helical; Signal-anchor for type II membrane protein transmembrane segment at 7 to 29 (VLNCCFKYIVLPVWIFIVLLLLH) threads the bilayer. Topologically, residues 30 to 563 (RDLSSWDGLM…SVMQSANILV (534 aa)) are lumenal. N-linked (GlcNAc...) asparagine glycosylation occurs at N50. C97 and C334 form a disulfide bridge. The tract at residues 109-225 (MKPASIIMIF…NGWLSPLLDT (117 aa)) is catalytic subdomain A. The catalytic subdomain B stretch occupies residues 280–342 (PYEVAAVRTS…PCSRVGHLQP (63 aa)). N-linked (GlcNAc...) asparagine glycosylation is found at N389 and N428. The region spanning 433–549 (ASGHVKTLEF…ANGKQRWILD (117 aa)) is the Ricin B-type lectin domain. C446 and C461 are oxidised to a cystine. N464 and N469 each carry an N-linked (GlcNAc...) asparagine glycan. 2 disulfide bridges follow: C485–C499 and C523–C537. N-linked (GlcNAc...) asparagine glycosylation is present at N552.

Belongs to the glycosyltransferase 2 family. GalNAc-T subfamily.

The protein localises to the golgi apparatus membrane. Functionally, probable inactive glycosyltransferase. This chain is Putative inactive polypeptide N-acetylgalactosaminyltransferase 12 (pgant12), found in Drosophila melanogaster (Fruit fly).